A 2511-amino-acid polypeptide reads, in one-letter code: MEEVVIAGMSGKLPESENLQEFWDNLIGGVDMVTDDDRRWKAGLYGLPRRSGKLKDLSRFDASFFGVHPKQAHTMDPQLRLLLEVTYEAIVDGGINPDSLRGTHTGVWVGVSGSETSEALSRDPETLVGYSMVGCQRAMMANRLSFFFDFRGPSIALDTACSSSLMALQNAYQAIHSGQCPAAIVGGINVLLKPNTSVQFLRLGMLSPEGTCKAFDTAGNGYCRSEGVVAVLLTKKSLARRVYATILNAGTNTDGFKEQGVTFPSGDIQEQLIRSLYQSAGVAPESFEYIEAHGTGTKVGDPQELNGITRALCATRQEPLLIGSTKSNMGHPEPASGLAALAKVLLSLEHGLWAPNLHFHSPNPEIPALLDGRLQVVDQPLPVRGGNVGINSFGFGGSNVHIILRPNTQPPPAPAPHATLPRLLRASGRTPEAVQKLLEQGLRHSQDLAFLSMLNDIAAVPATAMPFRGYAVLGGERGGPEVQQVPAGERPLWFICSGMGTQWRGMGLSLMRLDRFRDSILRSDEAVKPFGLKVSQLLLSTDESTFDDIVHSFVSLTAIQIGLIDLLSCMGLRPDGIVGHSLGEVACGYADGCLSQEEAVLAAYWRGQCIKEAHLPPGAMAAVGLSWEECKQRCPPGVVPACHNSKDTVTISGPQAPVFEFVEQLRKEGVFAKEVRTGGMAFHSYFMEAIAPPLLQELKKVIREPKPRSARWLSTSIPEAQWHSSLARTSSAEYNVNNLVSPVLFQEALWHVPEHAVVLEIAPHALLQAVLKRGLKPSCTIIPLMKKDHRDNLEFFLAGIGRLHLSGIDANPNALFPPVEFPAPRGTPLISPLIKWDHSLAWDVPAAEDFPNGSGSPSAAIYNIDTSSESPDHYLVDHTLDGRVLFPATGYLSIVWKTLARALGLGVEQLPVVFEDVVLHQATILPKTGTVSLEVRLLEASRAFEVSENGNLVVSGKVYQWDDPDPRLFDHPESPTPNPTEPLFLAQAEVYKELRLRGYDYGPHFQGILEASLEGDSGRLLWKDNWVSFMDTMLQMSILGSAKHGLYLPTRVTAIHIDPATHRQKLYTLQDKAQVADVVVSRWLRVTVAGGVHISGLHTESAPRRQQEQQVPILEKFCFTPHTEEGCLSERAALQEELQLCKGLVQALQTKVTQQGLKMVVPGLDGAQIPRDPSQQELPRLLSAACRLQLNGNLQLELAQVLAQERPKLPEDPLLSGLLDSPALKACLDTAVENMPSLKMKVVEVLAGHGHLYSRIPGLLSPHPLLQLSYTATDRHPQALEAAQAELQQHDVAQGQWDPADPAPSALGSADLLVCNCAVAALGDPASALSNMVAALREGGFLLLHTLLRGHPLGDIVAFLTSTEPQYGQGILSQDAWESLFSRVSLRLVGLKKSFYGSTLFLCRRPTPQDSPIFLPVDDTSFRWVESLKGILADEDSSRPVWLKAINCATSGVVGLVNCLRREPGGNRLRCVLLSNLSSTSHVPEVDPGSAELQKVLQGDLVMNVYRDGAWGAFRHFLLEEDKPEEPTAHAFVSTLTRGDLSSIRWVCSSLRHAQPTCPGAQLCTVYYASLNFRDIMLATGKLSPDAIPGKWTSQDSLLGMEFSGRDASGKRVMGLVPAKGLATSVLLSPDFLWDVPSNWTLEEAASVPVVYSTAYYALVVRGRVRPGETLLIHSGSGGVGQAAIAIALSLGCRVFTTVGSAEKRAYLQARFPQLDSTSFANSRDTSFEQHVLWHTGGKGVDLVLNSLAEEKLQASVRCLATHGRFLEIGKFDLSQNHPLGMAIFLKNVTFHGVLLDAFFNESSADWREVWALVQAGIRDGVVRPLKCTVFHGAQVEDAFRYMAQGKHIGKVVVQVLAEEPEAVLKGAKPKLMSAISKTFCPAHKSYIIAGGLGGFGLELAQWLIQRGVQKLVLTSRSGIRTGYQAKQVRRWRRQGVQVQVSTSNISSLEGARGLIAEAAQLGPVGGVFNLAVVLRDGLLENQTPEFFQDVCKPKYSGTLNLDRVTREACPELDYFVVFSSVSCGRGNAGQSNYGFANSAMERICEKRRHEGLPGLAVQWGAIGDVGILVETMSTNDTIVSGTLPQRMASCLEVLDLFLNQPHMVLSSFVLAEKAAAYRDRDSQRDLVEAVAHILGIRDLAAVNLDSSLADLGLDSLMSVEVRQTLERELNLVLSVREVRQLTLRKLQELSSKADEASELACPTPKEDGLAQQQTQLNLRSLLVNPEGPTLMRLNSVQSSERPLFLVHPIEGSTTVFHSLASRLSIPTYGLQCTRAAPLDSIHSLAAYYIDCIRQVQPEGPYRVAGYSYGACVAFEMCSQLQAQQSPAPTHNSLFLFDGSPTYVLAYTQSYRAKLTPGCEAEAETEAICFFVQQFTDMEHNRVLEALLPLKGLEERVAAAVDLIIKSHQGLDRQELSFAARSFYYKLRAAEQYTPKAKYHGNVMLLRAKTGGAYGEDLGADYNLSQVCDGKVSVHVIEGDHRTLLEGSGLESIISIIHSSLAEPRVSVREG.

Met-1 is subject to N-acetylmethionine. The 406-residue stretch at 1–406 (MEEVVIAGMS…GSNVHIILRP (406 aa)) folds into the Ketosynthase family 3 (KS3) domain. Ser-63 bears the Phosphoserine mark. At Lys-70 the chain carries N6-acetyllysine. Catalysis depends on Cys-161, which acts as the For beta-ketoacyl synthase activity. Ser-207 is modified (phosphoserine). Catalysis depends on His-293, which acts as the For beta-ketoacyl synthase activity. At Lys-298 the chain carries N6-acetyllysine. The active-site For beta-ketoacyl synthase activity is His-331. Residues 429–817 (RTPEAVQKLL…IDANPNALFP (389 aa)) form an acyl and malonyl transferases region. 2 positions are modified to N6-acetyllysine: Lys-436 and Lys-528. Residue Ser-581 is the For malonyltransferase activity of the active site. Residues 647-648 (DT) and Phe-671 each bind an acyl-CoA. Position 673 is an N6-acetyllysine (Lys-673). A Phosphoserine modification is found at Ser-725. Position 773 (Arg-773) interacts with an acyl-CoA. The N-terminal hotdog fold stretch occupies residues 838 to 966 (HSLAWDVPAA…KVYQWDDPDP (129 aa)). The PKS/mFAS DH domain occupies 838 to 1108 (HSLAWDVPAA…TESAPRRQQE (271 aa)). His-878 acts as the Proton acceptor; for dehydratase activity in catalysis. The tract at residues 981–1108 (EPLFLAQAEV…TESAPRRQQE (128 aa)) is C-terminal hotdog fold. Lys-992 bears the N6-acetyllysine mark. The active-site Proton donor; for dehydratase activity is the Asp-1031. A phosphoserine mark is found at Ser-1174 and Ser-1411. Cys-1471 carries the post-translational modification S-nitrosocysteine. Phosphoserine occurs at positions 1584 and 1594. The tract at residues 1635-1863 (DVPSNWTLEE…VQVLAEEPEA (229 aa)) is enoyl reductase. An NADP(+)-binding site is contributed by 1671–1688 (LLIHSGSGGVGQAAIAIA). Lys-1704 is subject to N6-(pyridoxal phosphate)lysine; alternate. N6-acetyllysine; alternate is present on Lys-1704. 2 positions are modified to N6-acetyllysine: Lys-1771 and Lys-1847. The interval 1864 to 2118 (VLKGAKPKLM…FVLAEKAAAY (255 aa)) is beta-ketoacyl reductase. 1886–1901 (SYIIAGGLGGFGLELA) is a binding site for NADP(+). The residue at position 1995 (Lys-1995) is an N6-acetyllysine. The residue at position 2091 (Cys-2091) is an S-nitrosocysteine. The Carrier domain occupies 2121–2198 (RDSQRDLVEA…ELSSKADEAS (78 aa)). At Ser-2156 the chain carries O-(pantetheine 4'-phosphoryl)serine; alternate. At Ser-2156 the chain carries Phosphoserine; alternate. At Ser-2198 the chain carries Phosphoserine. A phosphothreonine mark is found at Thr-2204 and Thr-2215. The segment at 2207–2511 (EDGLAQQQTQ…AEPRVSVREG (305 aa)) is thioesterase. Ser-2236 is subject to Phosphoserine. The active-site For thioesterase activity is Ser-2308. Lys-2391 is modified (N6-acetyllysine). Residue Lys-2449 forms a Glycyl lysine isopeptide (Lys-Gly) (interchain with G-Cter in SUMO2) linkage. Residue His-2481 is the For thioesterase activity of the active site.

As to quaternary structure, homodimer which is arranged in a head to tail fashion. Interacts with CEACAM1; this interaction is insulin and phosphorylation-dependent; reduces fatty-acid synthase activity. S-nitrosylation of Fatty acid synthase at cysteine residues Cys-1471 or Cys-2091 is important for the enzyme dimerization. In adipocytes, S-nitrosylation of Fatty acid synthase occurs under physiological conditions and gradually increases during adipogenesis. In terms of tissue distribution, ubiquitous. Prominent expression in brain, lung, liver and mammary gland.

Its subcellular location is the cytoplasm. It localises to the melanosome. The enzyme catalyses acetyl-CoA + n malonyl-CoA + 2n NADPH + 2n H(+) = a long-chain fatty acid + (n+1) CoA + n CO2 + 2n NADP(+).. It catalyses the reaction holo-[ACP] + acetyl-CoA = acetyl-[ACP] + CoA. The catalysed reaction is holo-[ACP] + malonyl-CoA = malonyl-[ACP] + CoA. It carries out the reaction a fatty acyl-[ACP] + malonyl-[ACP] + H(+) = a 3-oxoacyl-[ACP] + holo-[ACP] + CO2. The enzyme catalyses a (3R)-hydroxyacyl-[ACP] + NADP(+) = a 3-oxoacyl-[ACP] + NADPH + H(+). It catalyses the reaction a (3R)-hydroxyacyl-[ACP] = a (2E)-enoyl-[ACP] + H2O. The catalysed reaction is a 2,3-saturated acyl-[ACP] + NADP(+) = a (2E)-enoyl-[ACP] + NADPH + H(+). It carries out the reaction hexadecanoyl-[ACP] + H2O = hexadecanoate + holo-[ACP] + H(+). The enzyme catalyses acetyl-[ACP] + malonyl-[ACP] + H(+) = 3-oxobutanoyl-[ACP] + holo-[ACP] + CO2. It catalyses the reaction 3-oxobutanoyl-[ACP] + NADPH + H(+) = (3R)-hydroxybutanoyl-[ACP] + NADP(+). The catalysed reaction is (3R)-hydroxybutanoyl-[ACP] = (2E)-butenoyl-[ACP] + H2O. It carries out the reaction (2E)-butenoyl-[ACP] + NADPH + H(+) = butanoyl-[ACP] + NADP(+). The enzyme catalyses butanoyl-[ACP] + malonyl-[ACP] + H(+) = 3-oxohexanoyl-[ACP] + holo-[ACP] + CO2. It catalyses the reaction 3-oxohexanoyl-[ACP] + NADPH + H(+) = (3R)-hydroxyhexanoyl-[ACP] + NADP(+). The catalysed reaction is (3R)-hydroxyhexanoyl-[ACP] = (2E)-hexenoyl-[ACP] + H2O. It carries out the reaction (2E)-hexenoyl-[ACP] + NADPH + H(+) = hexanoyl-[ACP] + NADP(+). The enzyme catalyses hexanoyl-[ACP] + malonyl-[ACP] + H(+) = 3-oxooctanoyl-[ACP] + holo-[ACP] + CO2. It catalyses the reaction 3-oxooctanoyl-[ACP] + NADPH + H(+) = (3R)-hydroxyoctanoyl-[ACP] + NADP(+). The catalysed reaction is (3R)-hydroxyoctanoyl-[ACP] = (2E)-octenoyl-[ACP] + H2O. It carries out the reaction (2E)-octenoyl-[ACP] + NADPH + H(+) = octanoyl-[ACP] + NADP(+). The enzyme catalyses octanoyl-[ACP] + malonyl-[ACP] + H(+) = 3-oxodecanoyl-[ACP] + holo-[ACP] + CO2. It catalyses the reaction 3-oxodecanoyl-[ACP] + NADPH + H(+) = (3R)-hydroxydecanoyl-[ACP] + NADP(+). The catalysed reaction is (3R)-hydroxydecanoyl-[ACP] = (2E)-decenoyl-[ACP] + H2O. It carries out the reaction (2E)-decenoyl-[ACP] + NADPH + H(+) = decanoyl-[ACP] + NADP(+). The enzyme catalyses decanoyl-[ACP] + malonyl-[ACP] + H(+) = 3-oxododecanoyl-[ACP] + holo-[ACP] + CO2. It catalyses the reaction 3-oxododecanoyl-[ACP] + NADPH + H(+) = (3R)-hydroxydodecanoyl-[ACP] + NADP(+). The catalysed reaction is (3R)-hydroxydodecanoyl-[ACP] = (2E)-dodecenoyl-[ACP] + H2O. It carries out the reaction (2E)-dodecenoyl-[ACP] + NADPH + H(+) = dodecanoyl-[ACP] + NADP(+). The enzyme catalyses dodecanoyl-[ACP] + malonyl-[ACP] + H(+) = 3-oxotetradecanoyl-[ACP] + holo-[ACP] + CO2. It catalyses the reaction 3-oxotetradecanoyl-[ACP] + NADPH + H(+) = (3R)-hydroxytetradecanoyl-[ACP] + NADP(+). The catalysed reaction is (3R)-hydroxytetradecanoyl-[ACP] = (2E)-tetradecenoyl-[ACP] + H2O. It carries out the reaction (2E)-tetradecenoyl-[ACP] + NADPH + H(+) = tetradecanoyl-[ACP] + NADP(+). The enzyme catalyses tetradecanoyl-[ACP] + malonyl-[ACP] + H(+) = 3-oxohexadecanoyl-[ACP] + holo-[ACP] + CO2. It catalyses the reaction 3-oxohexadecanoyl-[ACP] + NADPH + H(+) = (3R)-hydroxyhexadecanoyl-[ACP] + NADP(+). The catalysed reaction is (3R)-hydroxyhexadecanoyl-[ACP] = (2E)-hexadecenoyl-[ACP] + H2O. It carries out the reaction (2E)-hexadecenoyl-[ACP] + NADPH + H(+) = hexadecanoyl-[ACP] + NADP(+). The enzyme catalyses hexadecanoyl-[ACP] + malonyl-[ACP] + H(+) = 3-oxooctadecanoyl-[ACP] + holo-[ACP] + CO2. It catalyses the reaction 3-oxooctadecanoyl-[ACP] + NADPH + H(+) = (3R)-hydroxyoctadecanoyl-[ACP] + NADP(+). The catalysed reaction is (3R)-hydroxyoctadecanoyl-[ACP] = (2E)-octadecenoyl-[ACP] + H2O. It carries out the reaction (2E)-octadecenoyl-[ACP] + NADPH + H(+) = octadecanoyl-[ACP] + NADP(+). The enzyme catalyses tetradecanoyl-[ACP] + H2O = tetradecanoate + holo-[ACP] + H(+). It catalyses the reaction octadecanoyl-[ACP] + H2O = octadecanoate + holo-[ACP] + H(+). It participates in lipid metabolism; fatty acid biosynthesis. With respect to regulation, activated by S-nitrosylation which promotes enzyme dimerization. Cerulenin, a potent non-competitive pharmacological inhibitor of FAS, binds covalently to the active site of the condensing enzyme region, inactivating a key enzyme step in fatty acid synthesis. Fatty acid synthetase is a multifunctional enzyme that catalyzes the de novo biosynthesis of long-chain saturated fatty acids starting from acetyl-CoA and malonyl-CoA in the presence of NADPH. This multifunctional protein contains 7 catalytic activities and a site for the binding of the prosthetic group 4'-phosphopantetheine of the acyl carrier protein ([ACP]) domain. Its function is as follows. (Microbial infection) Fatty acid synthetase activity is required for SARS coronavirus-2/SARS-CoV-2 replication. The polypeptide is Fatty acid synthase (FASN) (Homo sapiens (Human)).